A 120-amino-acid polypeptide reads, in one-letter code: Large ribosomal subunit protein bL19 (120 aa).

Belongs to the bacterial ribosomal protein bL19 family.

Functionally, this protein is located at the 30S-50S ribosomal subunit interface and may play a role in the structure and function of the aminoacyl-tRNA binding site. This chain is Large ribosomal subunit protein bL19 (rplS), found in Nostoc sp. (strain PCC 7120 / SAG 25.82 / UTEX 2576).